A 1241-amino-acid polypeptide reads, in one-letter code: MGRSSSKKKKKRGGSGRRGQLKDHGSNADEDNELLSEEITALSAIFQEDCKVVSDSRSPPQIAIKLRPYSKDMGYEDTDISAMLIVRCLPGYPYKCPKLQITPEQGLTTADAEKLLSLLEDQANSNAREGRVMIFNLVEAAQEFLSEIIPESHDEESVPCLTAHRSTQFIEQPMLSNIAKSCSGGPFVYGFIDLFSGLEDARNWSLTPDENRGIVSSVQSHPLDTSRILHQKPDKNLKRFEDHAKEEVALPAPIAKLNTVQEENVDDTSISSFDSSKSTDDVESGLFQNEKKESNLQDDTAEDDSTNSESESLGSWSSDSLAQDQVPQISKKDLLMVHLLRVACTSRGPLADALPQITDELHELGILSEEVLDLASKSSPDFNRTFEHAFNQNMASTSVPQFWEPPSDSCEPNASLPSSRYLNDFEELKPLGQGGFGHVVLCKNKLDGRQYAVKKIRLKDKEIPVNSRIVREVATLSRLQHQHVVRYYQAWFETGVVDPFAGANWGSKTAGSSMFSYSGAVSTEIPEQDNNLESTYLYIQMEYCPRTLRQVFESYNHFDKDFAWHLIRQIVEGLAHIHGQGIIHRDFTPNNIFFDARNDIKIGDFGLAKFLKLEQLDQDGGFSTDVAGSGVDSTGQAGTYFYTAPEIEQDWPKIDEKADMYSLGVVFFELWHPFGTAMERHVILTNLKLKGELPLKWVNEFPEQASLLRRLMSPSPSDRPSATELLKHAFPPRMESELLDNILRIMQTSEDSSVYDRVVSVIFDEEVLEMKSHQSSRSRLCADDSYIQYTEINTELRDYVVEITKEVFRQHCAKHLEVIPMRLLSDCPQFSRKTVKLLTNGGDMLELCYELRLPFVHWISVNQKSSFKRYEISHVYRRAIGHSPPNPCLQADFDIVGGTLSLTEAEVLKVIVDITTHIFHRGSCDIHLNHGDLLDAIWSWAGIKAEHRRKVAELLSMMGSLRPQSSERKLKWVFIRRQLLQELKLPEAVVNRLQTVASRFCGDADQALPRLRGALRADRPTRKALDELSNLLTYLRVWRIEEHVHIDVLMPPTESYHRNLFFQVFLTKENSSGTSNDGVLLAVGGRYDWLVQEVCDREHKMNLPGAVGVSLALETIFQHLPMDLRPIRNEVSTSVLVCSRGGGGLLVQRMELVAELWEKSIKAEFVPTPDPSLTEQYEYANEHEIKCLVIITESGVAQNQIEFVKVRHLELKKEKVVGREELVKFLLDAMAVQFRNPSVWS.

Basic residues predominate over residues 1 to 15; the sequence is MGRSSSKKKKKRGGS. The disordered stretch occupies residues 1–33; that stretch reads MGRSSSKKKKKRGGSGRRGQLKDHGSNADEDNE. Positions 37–148 constitute an RWD domain; the sequence is EEITALSAIF…EAAQEFLSEI (112 aa). The disordered stretch occupies residues 253–321; the sequence is PIAKLNTVQE…SLGSWSSDSL (69 aa). Composition is skewed to low complexity over residues 267 to 276 and 307 to 321; these read DTSISSFDSS and NSES…SDSL. The region spanning 425–731 is the Protein kinase domain; that stretch reads FEELKPLGQG…ATELLKHAFP (307 aa). Residues 431 to 439 and K454 each bind ATP; that span reads LGQGGFGHV. D586 acts as the Proton acceptor in catalysis. The segment at 819-1219 is histidyl-tRNA synthetase-like; that stretch reads IPMRLLSDCP…ELKKEKVVGR (401 aa).

This sequence belongs to the protein kinase superfamily. Ser/Thr protein kinase family. GCN2 subfamily. In terms of assembly, homodimer; homodimerization is important for kinase activation by uncharged tRNAs. As to expression, expressed in roots, leaves, stems, buds, flowers, siliques and seedlings.

The protein localises to the cytoplasm. The enzyme catalyses L-seryl-[protein] + ATP = O-phospho-L-seryl-[protein] + ADP + H(+). The catalysed reaction is L-threonyl-[protein] + ATP = O-phospho-L-threonyl-[protein] + ADP + H(+). Its activity is regulated as follows. The kinase activity is stimulated upon binding to uncharged tRNAs. Its function is as follows. Metabolic-stress sensing protein kinase that phosphorylates the alpha subunit of eukaryotic translation initiation factor 2 eIF-2-alpha in response to low amino acid availability. Plays a role as an activator of the general amino acid control pathway required for adapatation to amino acid starvation. Converts phosphorylated eIF-2-alpha either to a competitive inhibitor of translation initiation, leading to a global protein synthesis repression, and thus to a reduced overall utilization of amino acids, or to a translational initiation activation of specific mRNAs, and hence allowing reprogramming of amino acid biosynthetic gene expression to alleviate nutrient depletion. Binds uncharged tRNAs. This is eIF-2-alpha kinase GCN2 from Arabidopsis thaliana (Mouse-ear cress).